Reading from the N-terminus, the 608-residue chain is UvrABC system protein C (608 aa).

Residues 13–91 (HKPGVYIMHD…IKKNSPKYNI (79 aa)) form the GIY-YIG domain. The UVR domain occupies 202 to 237 (DELTKKLTDKMMAASKNLNFELAAKLRDSITNIQVI).

This sequence belongs to the UvrC family. In terms of assembly, interacts with UvrB in an incision complex.

The protein localises to the cytoplasm. Functionally, the UvrABC repair system catalyzes the recognition and processing of DNA lesions. UvrC both incises the 5' and 3' sides of the lesion. The N-terminal half is responsible for the 3' incision and the C-terminal half is responsible for the 5' incision. This is UvrABC system protein C from Finegoldia magna (strain ATCC 29328 / DSM 20472 / WAL 2508) (Peptostreptococcus magnus).